Reading from the N-terminus, the 185-residue chain is Peptidyl-tRNA hydrolase (185 aa).

Tyrosine 14 is a tRNA binding site. Residue histidine 19 is the Proton acceptor of the active site. Residues tyrosine 64, asparagine 66, and asparagine 112 each contribute to the tRNA site.

The protein belongs to the PTH family. Monomer.

It localises to the cytoplasm. The enzyme catalyses an N-acyl-L-alpha-aminoacyl-tRNA + H2O = an N-acyl-L-amino acid + a tRNA + H(+). In terms of biological role, hydrolyzes ribosome-free peptidyl-tRNAs (with 1 or more amino acids incorporated), which drop off the ribosome during protein synthesis, or as a result of ribosome stalling. Its function is as follows. Catalyzes the release of premature peptidyl moieties from peptidyl-tRNA molecules trapped in stalled 50S ribosomal subunits, and thus maintains levels of free tRNAs and 50S ribosomes. The sequence is that of Peptidyl-tRNA hydrolase from Lactobacillus helveticus (strain DPC 4571).